A 256-amino-acid chain; its full sequence is Imidazole glycerol phosphate synthase subunit HisF (256 aa).

Active-site residues include Asp-13 and Asp-132.

It belongs to the HisA/HisF family. Heterodimer of HisH and HisF.

Its subcellular location is the cytoplasm. It carries out the reaction 5-[(5-phospho-1-deoxy-D-ribulos-1-ylimino)methylamino]-1-(5-phospho-beta-D-ribosyl)imidazole-4-carboxamide + L-glutamine = D-erythro-1-(imidazol-4-yl)glycerol 3-phosphate + 5-amino-1-(5-phospho-beta-D-ribosyl)imidazole-4-carboxamide + L-glutamate + H(+). Its pathway is amino-acid biosynthesis; L-histidine biosynthesis; L-histidine from 5-phospho-alpha-D-ribose 1-diphosphate: step 5/9. Its function is as follows. IGPS catalyzes the conversion of PRFAR and glutamine to IGP, AICAR and glutamate. The HisF subunit catalyzes the cyclization activity that produces IGP and AICAR from PRFAR using the ammonia provided by the HisH subunit. This is Imidazole glycerol phosphate synthase subunit HisF from Leptospira borgpetersenii serovar Hardjo-bovis (strain JB197).